A 431-amino-acid polypeptide reads, in one-letter code: 3-deoxy-D-manno-octulosonic acid transferase (431 aa).

Residues 5–27 form a helical; Signal-anchor membrane-spanning segment; sequence WLTSRLYDAFLVCAFFVSAPRIF. Residue glutamate 67 is the Proton acceptor of the active site. CMP contacts are provided by residues 275 to 276, 315 to 317, and 342 to 345; these read PR, MGV, and NLLE.

It belongs to the glycosyltransferase group 1 family. Glycosyltransferase 30 subfamily.

The protein localises to the cell inner membrane. The enzyme catalyses lipid IVA (E. coli) + CMP-3-deoxy-beta-D-manno-octulosonate = alpha-Kdo-(2-&gt;6)-lipid IVA (E. coli) + CMP + H(+). It catalyses the reaction alpha-Kdo-(2-&gt;6)-lipid IVA (E. coli) + CMP-3-deoxy-beta-D-manno-octulosonate = alpha-Kdo-(2-&gt;4)-alpha-Kdo-(2-&gt;6)-lipid IVA (E. coli) + CMP + H(+). The catalysed reaction is alpha-Kdo-(2-&gt;4)-alpha-Kdo-(2-&gt;6)-lipid IVA (E. coli) + CMP-3-deoxy-beta-D-manno-octulosonate = alpha-Kdo-(2-&gt;8)-alpha-Kdo-(2-&gt;4)-alpha-Kdo-(2-&gt;6)-lipid IVA (E. coli) + CMP + H(+). Its pathway is bacterial outer membrane biogenesis; LPS core biosynthesis. Functionally, involved in lipopolysaccharide (LPS) biosynthesis. Catalyzes the transfer of three 3-deoxy-D-manno-octulosonate (Kdo) residues from CMP-Kdo to lipid IV(A), the tetraacyldisaccharide-1,4'-bisphosphate precursor of lipid A. Thus generates the genus-specific LPS epitope of Chlamydia, composed of the trisaccharide alpha-Kdo-(2-&gt;8)-alpha-Kdo-(2-&gt;4)-alpha-Kdo. This Chlamydia trachomatis serovar A (strain ATCC VR-571B / DSM 19440 / HAR-13) protein is 3-deoxy-D-manno-octulosonic acid transferase (waaA).